The chain runs to 121 residues: Phosphoribosyl-ATP pyrophosphatase (121 aa).

It belongs to the PRA-PH family.

The protein localises to the cytoplasm. The catalysed reaction is 1-(5-phospho-beta-D-ribosyl)-ATP + H2O = 1-(5-phospho-beta-D-ribosyl)-5'-AMP + diphosphate + H(+). It functions in the pathway amino-acid biosynthesis; L-histidine biosynthesis; L-histidine from 5-phospho-alpha-D-ribose 1-diphosphate: step 2/9. This is Phosphoribosyl-ATP pyrophosphatase from Burkholderia vietnamiensis (strain G4 / LMG 22486) (Burkholderia cepacia (strain R1808)).